The following is a 511-amino-acid chain: UDP-N-acetylmuramoyl-L-alanyl-D-glutamate--2,6-diaminopimelate ligase (511 aa).

Ser-33 is a binding site for UDP-N-acetyl-alpha-D-muramoyl-L-alanyl-D-glutamate. 118 to 124 (GTNGKTT) contributes to the ATP binding site. UDP-N-acetyl-alpha-D-muramoyl-L-alanyl-D-glutamate contacts are provided by residues 160-161 (TT), Ser-187, Gln-193, and Arg-195. An N6-carboxylysine modification is found at Lys-227. Meso-2,6-diaminopimelate is bound by residues Arg-403, 427 to 430 (DNPR), Gly-478, and Glu-482. A Meso-diaminopimelate recognition motif motif is present at residues 427–430 (DNPR).

This sequence belongs to the MurCDEF family. MurE subfamily. It depends on Mg(2+) as a cofactor. In terms of processing, carboxylation is probably crucial for Mg(2+) binding and, consequently, for the gamma-phosphate positioning of ATP.

Its subcellular location is the cytoplasm. The enzyme catalyses UDP-N-acetyl-alpha-D-muramoyl-L-alanyl-D-glutamate + meso-2,6-diaminopimelate + ATP = UDP-N-acetyl-alpha-D-muramoyl-L-alanyl-gamma-D-glutamyl-meso-2,6-diaminopimelate + ADP + phosphate + H(+). It participates in cell wall biogenesis; peptidoglycan biosynthesis. Catalyzes the addition of meso-diaminopimelic acid to the nucleotide precursor UDP-N-acetylmuramoyl-L-alanyl-D-glutamate (UMAG) in the biosynthesis of bacterial cell-wall peptidoglycan. This Prochlorococcus marinus subsp. pastoris (strain CCMP1986 / NIES-2087 / MED4) protein is UDP-N-acetylmuramoyl-L-alanyl-D-glutamate--2,6-diaminopimelate ligase.